Consider the following 410-residue polypeptide: MKQELIERFTRYVKIDTQSNEESHTVPTTPGQIEFGKLLVEELKEIGLSEVTMDEKGYVMATLPANTDKDVPVIGFLAHLDTATDFTGKNVKPQIHENFDGNAITLNEELNVVLTPEQFPELPSYKGHTIITTDGTTLLGADDKAGLTEIMVAMNYLIHNPQIKHGKIRVAFTPDEEIGRGPSHFDVEAFGASFAYTMDGGPLGGLEYESFNAASAKLTFRGTNTHPGTAKNKMRNASKLAMEFDRQLPVEEAPEYTEGYEGFYHLLSLNGDVEQSKAYYIIRDFDRNHFEARKNNIKDIVKNMQEKYGEDAIVLEMNDQYYNMLEKIEPVREIVDIAYEAMKSLNIEPNIHPIRGGTDGSQLSYMGLPTPNIFTGGENYHGKFEYVSVDTMEKAVQVIVEIARRFEEQA.

Residue histidine 79 coordinates Zn(2+). Aspartate 81 is an active-site residue. Residue aspartate 142 participates in Zn(2+) binding. The active-site Proton acceptor is the glutamate 176. Glutamate 177, aspartate 199, and histidine 381 together coordinate Zn(2+).

It belongs to the peptidase M20B family. Requires Zn(2+) as cofactor.

It localises to the cytoplasm. The catalysed reaction is Release of the N-terminal residue from a tripeptide.. Cleaves the N-terminal amino acid of tripeptides. The polypeptide is Peptidase T (Bacillus mycoides (strain KBAB4) (Bacillus weihenstephanensis)).